Here is a 248-residue protein sequence, read N- to C-terminus: Small ribosomal subunit protein uS3 (248 aa).

The KH type-2 domain maps to 39 to 108 (IRKLVSQKLA…TVAVNVAEIP (70 aa)). The interval 212-248 (KTETLARPPRKSDERRREDGERPSRRRPTARRRPGGE) is disordered. Over residues 221–234 (RKSDERRREDGERP) the composition is skewed to basic and acidic residues. A compositionally biased stretch (basic residues) spans 235-248 (SRRRPTARRRPGGE).

It belongs to the universal ribosomal protein uS3 family. As to quaternary structure, part of the 30S ribosomal subunit. Forms a tight complex with proteins S10 and S14.

Its function is as follows. Binds the lower part of the 30S subunit head. Binds mRNA in the 70S ribosome, positioning it for translation. This is Small ribosomal subunit protein uS3 from Deinococcus geothermalis (strain DSM 11300 / CIP 105573 / AG-3a).